The chain runs to 229 residues: MLRTKVFATTVARISGIRRYIPIRTINTVTKKNISKIEKLCEVLEVNPDGYKGKERIPTKELTKLLYTTSRNMLVRVPMTGDLSTGNTFETRNETLQKLGEQLIHLEINKMLTITFTNFNQFNIMNKNFNYIHNLDRARVVNMDSISWLIKNSLKINQLAHLRIPANLPKEMGLTSSSNDFQNLNDWKVILSFIGYLKLLEIKNDNKKFIESIIKTICIPLINYHLRKS.

The N-terminal 25 residues, Met1–Thr25, are a transit peptide targeting the mitochondrion.

It localises to the mitochondrion inner membrane. Its function is as follows. mRNA-specific translational activator of cytochrome b. The cytochrome b (COB) leader RNA may represent the target sequence for CBS1 and CBS2, tethering the COB mRNA to the inner mitochondrial membrane, where cotranslational insertion of cytochrome b into the membrane can occur. In Saccharomyces cerevisiae (strain ATCC 204508 / S288c) (Baker's yeast), this protein is Cytochrome b translational activator protein CBS1, mitochondrial (CBS1).